Consider the following 172-residue polypeptide: MNKRNKVKQLNRSADHRKAMIQNMVISLLRHERIESSVAKLKVARSYAERIITRAKRNLDANLANLDEQKKNAAILHNTRYLYSHLGDQEIVTKLLKDLANRYAERVGGYTRIIRLVNRPSDNTAMGILELVDRKTQDELKAEAKAKREEKKPAKKEEKPKKAKKEKAAASN.

The segment covering 140–160 has biased composition (basic and acidic residues); that stretch reads LKAEAKAKREEKKPAKKEEKP. The interval 140–172 is disordered; it reads LKAEAKAKREEKKPAKKEEKPKKAKKEKAAASN.

This sequence belongs to the bacterial ribosomal protein bL17 family. As to quaternary structure, part of the 50S ribosomal subunit. Contacts protein L32.

The protein is Large ribosomal subunit protein bL17 of Leptospira biflexa serovar Patoc (strain Patoc 1 / Ames).